Consider the following 273-residue polypeptide: Ribosomal RNA small subunit methyltransferase A (273 aa).

S-adenosyl-L-methionine-binding residues include His-10, Leu-12, Gly-37, Glu-58, Asp-83, and Asn-108.

Belongs to the class I-like SAM-binding methyltransferase superfamily. rRNA adenine N(6)-methyltransferase family. RsmA subfamily.

Its subcellular location is the cytoplasm. It catalyses the reaction adenosine(1518)/adenosine(1519) in 16S rRNA + 4 S-adenosyl-L-methionine = N(6)-dimethyladenosine(1518)/N(6)-dimethyladenosine(1519) in 16S rRNA + 4 S-adenosyl-L-homocysteine + 4 H(+). In terms of biological role, specifically dimethylates two adjacent adenosines (A1518 and A1519) in the loop of a conserved hairpin near the 3'-end of 16S rRNA in the 30S particle. May play a critical role in biogenesis of 30S subunits. In Picosynechococcus sp. (strain ATCC 27264 / PCC 7002 / PR-6) (Agmenellum quadruplicatum), this protein is Ribosomal RNA small subunit methyltransferase A.